The primary structure comprises 672 residues: Acetoacetyl-CoA synthetase (672 aa).

Belongs to the ATP-dependent AMP-binding enzyme family.

The protein localises to the cytoplasm. It localises to the cytosol. The enzyme catalyses acetoacetate + ATP + CoA = acetoacetyl-CoA + AMP + diphosphate. Its function is as follows. Converts acetoacetate to acetoacetyl-CoA in the cytosol. Ketone body-utilizing enzyme, responsible for the synthesis of cholesterol and fatty acids. The sequence is that of Acetoacetyl-CoA synthetase (AACS) from Macaca fascicularis (Crab-eating macaque).